The primary structure comprises 656 residues: MWSLALATLFVLGTVIRADQCPPVPADTKDKLEKILELIGHVNRPLTPETPEPAGYDETKLKGLGILPQHEIFSLFDERTWPEATKAAEFLMEATDFEHFIQRADVLRHRINEDMFMYALNVAVLHRKDTRGVQVPRIHKIYPDKFLKQDILVEVREKVNHGEEKPVVDATELHQNQLDPNYRLSYFLEDIGMNSHHYHWHVVHPAVWLPKHGPRKDRKGELFYYMHHQMVARYDSERLSNNLPRTEPFENWDDPLEEGYAPHLTIHKTGYNYMFRPEGLIVRDLPELNKNKMRQWKSRILHGIHLNVLYAENGTKISLDNEHGIDLLGDAIESSLLSVNRAFYGNIHCYAHVMAARIADPDGRYGEDNGVMHDVATSARDPLFYRWHKFIDNIFLEYKDNLDPYTQYELTWPDVVLNDVTVKPHKGDYDDEVHTYWEVDNYELGKGFDYTRKTTATVKVRHLQHEDYHYEIDIDNNAGKAKKAVFRIFLAPKYNEKGELFPVNEQRQLLVELDKFVATLEPGHNVIERQSKESSVTMSKDHVFGEIRNLADDHQCSCGWPDYLLLPKGKYEGMTYQLFVVATDYEEDHVEDAGEECQCRDSMSYCGSVEHKLPDNKPLGYPFDRRIDGTGFEEFKTQNMYYGDVVIQFTGETVTH.

The first 18 residues, 1–18 (MWSLALATLFVLGTVIRA), serve as a signal peptide directing secretion. The Cu cation site is built by His197, His201, and His227. N-linked (GlcNAc...) asparagine glycosylation is present at Asn313. Residues His348, His352, and His388 each coordinate Cu cation. A disulfide bond links Cys558 and Cys606.

This sequence belongs to the tyrosinase family. Hemocyanin subfamily. In terms of assembly, 36-chain polymer consisting of 6 hexamers, each of which includes 4 different chains, A, B, C and D. As to expression, hemolymph.

The protein localises to the secreted. It localises to the extracellular space. Functionally, hemocyanins are copper-containing oxygen carriers occurring freely dissolved in the hemolymph of many mollusks and arthropods. This Scutigera coleoptrata (House centipede) protein is Hemocyanin subunit A (HCA).